The following is a 475-amino-acid chain: MKLINTFATELPWACEPVVPQPLREPRLLHLNRGLLAELGLDGVSDTDWLACCGLGQPLPGMQPVAQVYAGHQFGGYSPRLGDGRALLLGEQLATDGQRWDLHLKGAGKTPFSRFGDGRAVLRSSIREYLASEALHALGIPTTRALVLVGSKEPVYREQEETGATVLRTAPSHLRFGHIEYFAWSGQGEKIPALIDYLLRYHFPELENGAELFAEVVRRTARLIAKWQAAGFCHGVLNTDNMSLLGLTLDYGPYGFIDAYVPDFVCNHSDPDGRYALDQQPAVGYWNLQKLAQALAGHVDGDALATSLAQYEHQLMLHYSELMRAKLGLTQWEEEDPALFRQLFQLLASQGVDYHLFLRRLGEVTGTGEWPASLLALLPDPDLWQGWLELYRVRLTREGGEDAVRKAQMDAINPKYVLRNALAQQAIDAAEGGDMTQFERLLAALQQPYDEQPEYADLATPVPQWYCGGELSCSS.

ATP contacts are provided by glycine 82, glycine 84, arginine 85, lysine 105, aspartate 117, glycine 118, arginine 168, and arginine 175. Aspartate 240 serves as the catalytic Proton acceptor. Asparagine 241 and aspartate 250 together coordinate Mg(2+). Aspartate 250 is an ATP binding site.

This sequence belongs to the SELO family. Requires Mg(2+) as cofactor. Mn(2+) is required as a cofactor.

The enzyme catalyses L-seryl-[protein] + ATP = 3-O-(5'-adenylyl)-L-seryl-[protein] + diphosphate. The catalysed reaction is L-threonyl-[protein] + ATP = 3-O-(5'-adenylyl)-L-threonyl-[protein] + diphosphate. It carries out the reaction L-tyrosyl-[protein] + ATP = O-(5'-adenylyl)-L-tyrosyl-[protein] + diphosphate. It catalyses the reaction L-histidyl-[protein] + UTP = N(tele)-(5'-uridylyl)-L-histidyl-[protein] + diphosphate. The enzyme catalyses L-seryl-[protein] + UTP = O-(5'-uridylyl)-L-seryl-[protein] + diphosphate. The catalysed reaction is L-tyrosyl-[protein] + UTP = O-(5'-uridylyl)-L-tyrosyl-[protein] + diphosphate. Functionally, nucleotidyltransferase involved in the post-translational modification of proteins. It can catalyze the addition of adenosine monophosphate (AMP) or uridine monophosphate (UMP) to a protein, resulting in modifications known as AMPylation and UMPylation. This is Protein nucleotidyltransferase YdiU from Aeromonas salmonicida (strain A449).